The primary structure comprises 79 residues: Small ribosomal subunit protein bS18 (79 aa).

The protein belongs to the bacterial ribosomal protein bS18 family. As to quaternary structure, part of the 30S ribosomal subunit. Forms a tight heterodimer with protein bS6.

Functionally, binds as a heterodimer with protein bS6 to the central domain of the 16S rRNA, where it helps stabilize the platform of the 30S subunit. The chain is Small ribosomal subunit protein bS18 from Nitrobacter winogradskyi (strain ATCC 25391 / DSM 10237 / CIP 104748 / NCIMB 11846 / Nb-255).